A 347-amino-acid polypeptide reads, in one-letter code: MTPPSRIVTPERRADDVGDTALRPQTLAEFVGQQQARANLQIFIDAARKRQEALDHVLFVGPPGLGKTTLAQIVARELGVGFRATSGPVIAKAGDLAALLTNLEERDVLFIDEIHRLSPAVEEVLYPAMEDFQLDLIIGEGPAARSVKIELSKFTLVGATTRAGLLTNPLRDRFGIPIRLNFYTVEELEGIVSRGARVLGTGITPDGANEIARRARGTPRIAGRLLRRVRDFASAADAAAIDRRIADHALSALEVDAAGLDAMDRRYLSTIALNYGGGPVGVETMAAALSEPRDAIEDIIEPFLIQCGYLQRTPRGRLLTSHAFKHLGLAEPSREASQFGLFGGDEE.

A large ATPase domain (RuvB-L) region spans residues 1 to 183 (MTPPSRIVTP…FGIPIRLNFY (183 aa)). Residues Leu22, Arg23, Gly64, Lys67, Thr68, Thr69, 130–132 (EDF), Arg173, Tyr183, and Arg220 contribute to the ATP site. Thr68 contacts Mg(2+). The small ATPAse domain (RuvB-S) stretch occupies residues 184–254 (TVEELEGIVS…IADHALSALE (71 aa)). The segment at 257–347 (AAGLDAMDRR…QFGLFGGDEE (91 aa)) is head domain (RuvB-H). DNA is bound by residues Arg293, Arg312, and Arg317.

It belongs to the RuvB family. In terms of assembly, homohexamer. Forms an RuvA(8)-RuvB(12)-Holliday junction (HJ) complex. HJ DNA is sandwiched between 2 RuvA tetramers; dsDNA enters through RuvA and exits via RuvB. An RuvB hexamer assembles on each DNA strand where it exits the tetramer. Each RuvB hexamer is contacted by two RuvA subunits (via domain III) on 2 adjacent RuvB subunits; this complex drives branch migration. In the full resolvosome a probable DNA-RuvA(4)-RuvB(12)-RuvC(2) complex forms which resolves the HJ.

Its subcellular location is the cytoplasm. The enzyme catalyses ATP + H2O = ADP + phosphate + H(+). Its function is as follows. The RuvA-RuvB-RuvC complex processes Holliday junction (HJ) DNA during genetic recombination and DNA repair, while the RuvA-RuvB complex plays an important role in the rescue of blocked DNA replication forks via replication fork reversal (RFR). RuvA specifically binds to HJ cruciform DNA, conferring on it an open structure. The RuvB hexamer acts as an ATP-dependent pump, pulling dsDNA into and through the RuvAB complex. RuvB forms 2 homohexamers on either side of HJ DNA bound by 1 or 2 RuvA tetramers; 4 subunits per hexamer contact DNA at a time. Coordinated motions by a converter formed by DNA-disengaged RuvB subunits stimulates ATP hydrolysis and nucleotide exchange. Immobilization of the converter enables RuvB to convert the ATP-contained energy into a lever motion, pulling 2 nucleotides of DNA out of the RuvA tetramer per ATP hydrolyzed, thus driving DNA branch migration. The RuvB motors rotate together with the DNA substrate, which together with the progressing nucleotide cycle form the mechanistic basis for DNA recombination by continuous HJ branch migration. Branch migration allows RuvC to scan DNA until it finds its consensus sequence, where it cleaves and resolves cruciform DNA. The chain is Holliday junction branch migration complex subunit RuvB from Rhodopseudomonas palustris (strain BisA53).